We begin with the raw amino-acid sequence, 447 residues long: Glycerol-3-phosphate acyltransferase ATS11, chloroplastic (447 aa).

The disordered stretch occupies residues 1–21 (MFILSSSSSLPSPLSLSSSRV). The N-terminal 48 residues, 1–48 (MFILSSSSSLPSPLSLSSSRVSLPPPSSSSLNLLPLSPHFQPPNLACS), are a transit peptide targeting the chloroplast. The short motif at 217–222 (HQTEAD) is the HXXXXD motif element.

The protein belongs to the GPAT/DAPAT family.

Its subcellular location is the plastid. The protein resides in the chloroplast stroma. The enzyme catalyses a fatty acyl-[ACP] + sn-glycerol 3-phosphate = a 1-acyl-sn-glycero-3-phosphate + holo-[ACP]. It catalyses the reaction sn-glycerol 3-phosphate + an acyl-CoA = a 1-acyl-sn-glycero-3-phosphate + CoA. Its pathway is phospholipid metabolism; CDP-diacylglycerol biosynthesis; CDP-diacylglycerol from sn-glycerol 3-phosphate: step 1/3. Esterifies the acyl-group from acyl-acyl carrier proteins (acyl-ACPs) to the sn-1 position of glycerol-3-phosphate. The physiological acyl donors in chloroplasts are acyl-ACPs, but acyl-CoAs are used as artificial donor for in vitro reactions. The enzyme from chilling-resistant plants discriminates against non-fluid palmitic acid and selects oleic acid whereas the enzyme from sensitive plants accepts both fatty acids. Squash is chilling-sensitive. Preferably utilizes oleoyl groups (18:1-ACP) and has lower affinity to palmitoyl (16:0-ACP) and stearoyl groups (18:0-ACP). In Cucurbita moschata (Winter crookneck squash), this protein is Glycerol-3-phosphate acyltransferase ATS11, chloroplastic.